The chain runs to 479 residues: Aspartyl/glutamyl-tRNA(Asn/Gln) amidotransferase subunit B (479 aa).

The protein belongs to the GatB/GatE family. GatB subfamily. As to quaternary structure, heterotrimer of A, B and C subunits.

It carries out the reaction L-glutamyl-tRNA(Gln) + L-glutamine + ATP + H2O = L-glutaminyl-tRNA(Gln) + L-glutamate + ADP + phosphate + H(+). It catalyses the reaction L-aspartyl-tRNA(Asn) + L-glutamine + ATP + H2O = L-asparaginyl-tRNA(Asn) + L-glutamate + ADP + phosphate + 2 H(+). Allows the formation of correctly charged Asn-tRNA(Asn) or Gln-tRNA(Gln) through the transamidation of misacylated Asp-tRNA(Asn) or Glu-tRNA(Gln) in organisms which lack either or both of asparaginyl-tRNA or glutaminyl-tRNA synthetases. The reaction takes place in the presence of glutamine and ATP through an activated phospho-Asp-tRNA(Asn) or phospho-Glu-tRNA(Gln). The polypeptide is Aspartyl/glutamyl-tRNA(Asn/Gln) amidotransferase subunit B (Streptococcus pyogenes serotype M4 (strain MGAS10750)).